The sequence spans 255 residues: 5-oxoprolinase subunit A (255 aa).

It belongs to the LamB/PxpA family. Forms a complex composed of PxpA, PxpB and PxpC.

It catalyses the reaction 5-oxo-L-proline + ATP + 2 H2O = L-glutamate + ADP + phosphate + H(+). Catalyzes the cleavage of 5-oxoproline to form L-glutamate coupled to the hydrolysis of ATP to ADP and inorganic phosphate. The polypeptide is 5-oxoprolinase subunit A (Rhodopseudomonas palustris (strain BisB18)).